We begin with the raw amino-acid sequence, 348 residues long: tRNA N6-adenosine threonylcarbamoyltransferase (348 aa).

Fe cation contacts are provided by H115 and H119. Residues 138-142, D171, G184, and N278 each bind substrate; that span reads LVSGG. Residue D306 participates in Fe cation binding.

It belongs to the KAE1 / TsaD family. It depends on Fe(2+) as a cofactor.

The protein localises to the cytoplasm. It carries out the reaction L-threonylcarbamoyladenylate + adenosine(37) in tRNA = N(6)-L-threonylcarbamoyladenosine(37) in tRNA + AMP + H(+). Required for the formation of a threonylcarbamoyl group on adenosine at position 37 (t(6)A37) in tRNAs that read codons beginning with adenine. Is involved in the transfer of the threonylcarbamoyl moiety of threonylcarbamoyl-AMP (TC-AMP) to the N6 group of A37, together with TsaE and TsaB. TsaD likely plays a direct catalytic role in this reaction. The protein is tRNA N6-adenosine threonylcarbamoyltransferase of Methylibium petroleiphilum (strain ATCC BAA-1232 / LMG 22953 / PM1).